Here is a 149-residue protein sequence, read N- to C-terminus: Deoxyuridine 5'-triphosphate nucleotidohydrolase (149 aa).

Substrate-binding positions include Arg68–Gly70, Asn81, Leu85–Asp87, and Met95.

Belongs to the dUTPase family. Mg(2+) is required as a cofactor.

The enzyme catalyses dUTP + H2O = dUMP + diphosphate + H(+). It participates in pyrimidine metabolism; dUMP biosynthesis; dUMP from dCTP (dUTP route): step 2/2. Its function is as follows. This enzyme is involved in nucleotide metabolism: it produces dUMP, the immediate precursor of thymidine nucleotides and it decreases the intracellular concentration of dUTP so that uracil cannot be incorporated into DNA. The polypeptide is Deoxyuridine 5'-triphosphate nucleotidohydrolase (Bordetella avium (strain 197N)).